Reading from the N-terminus, the 478-residue chain is Aspartyl/glutamyl-tRNA(Asn/Gln) amidotransferase subunit B (478 aa).

The protein belongs to the GatB/GatE family. GatB subfamily. Heterotrimer of A, B and C subunits.

It carries out the reaction L-glutamyl-tRNA(Gln) + L-glutamine + ATP + H2O = L-glutaminyl-tRNA(Gln) + L-glutamate + ADP + phosphate + H(+). The catalysed reaction is L-aspartyl-tRNA(Asn) + L-glutamine + ATP + H2O = L-asparaginyl-tRNA(Asn) + L-glutamate + ADP + phosphate + 2 H(+). Allows the formation of correctly charged Asn-tRNA(Asn) or Gln-tRNA(Gln) through the transamidation of misacylated Asp-tRNA(Asn) or Glu-tRNA(Gln) in organisms which lack either or both of asparaginyl-tRNA or glutaminyl-tRNA synthetases. The reaction takes place in the presence of glutamine and ATP through an activated phospho-Asp-tRNA(Asn) or phospho-Glu-tRNA(Gln). This Syntrophotalea carbinolica (strain DSM 2380 / NBRC 103641 / GraBd1) (Pelobacter carbinolicus) protein is Aspartyl/glutamyl-tRNA(Asn/Gln) amidotransferase subunit B.